A 206-amino-acid polypeptide reads, in one-letter code: Small ribosomal subunit protein uS4 (206 aa).

One can recognise an S4 RNA-binding domain in the interval 98 to 164; that stretch reads MRLDNVVYRL…EKFKTFIENP (67 aa).

This sequence belongs to the universal ribosomal protein uS4 family. As to quaternary structure, part of the 30S ribosomal subunit. Contacts protein S5. The interaction surface between S4 and S5 is involved in control of translational fidelity.

Its function is as follows. One of the primary rRNA binding proteins, it binds directly to 16S rRNA where it nucleates assembly of the body of the 30S subunit. Functionally, with S5 and S12 plays an important role in translational accuracy. This Clostridium tetani (strain Massachusetts / E88) protein is Small ribosomal subunit protein uS4.